The chain runs to 84 residues: MPRHESAKKRMRQNEKRQKRNKSQKSRVRTKIKTLRSLDDKEEAEELLNDVKGDLDRLAAKGIIHENKAANRKSKLEKHVDALE.

Positions 1–32 (MPRHESAKKRMRQNEKRQKRNKSQKSRVRTKI) are disordered.

This sequence belongs to the bacterial ribosomal protein bS20 family.

In terms of biological role, binds directly to 16S ribosomal RNA. This Salinibacter ruber (strain DSM 13855 / M31) protein is Small ribosomal subunit protein bS20.